The primary structure comprises 162 residues: Caveolin-2 (162 aa).

Residues 1–86 are Cytoplasmic-facing; sequence MGLETEKADV…FEISKYVMYK (86 aa). Tyr-19 carries the post-translational modification Phosphotyrosine; by SRC. 2 positions are modified to phosphoserine: Ser-20 and Ser-23. Position 27 is a phosphotyrosine; by SRC (Tyr-27). Ser-36 is modified (phosphoserine). Residues 87–107 constitute an intramembrane region (helical); the sequence is FLTVFLAIPLAFIAGILFATL. At 108–162 the chain is on the cytoplasmic side; sequence SCLHIWILMPFVKTCLMVLPSVQTIWKSVTDVFIAPLCTSVGRSFSSVSLQLSQD.

Belongs to the caveolin family. As to quaternary structure, monomer or homodimer. Interacts with CAV1; the interaction forms a stable heterooligomeric complex that is required for targeting to lipid rafts and for caveolae formation. Tyrosine phosphorylated forms do not form heterooligomers with the Tyr-19-phosphorylated form existing as a monomer or dimer, and the Tyr-27-form as a monomer only. Interacts (tyrosine phosphorylated form) with the SH2 domain-containing proteins, RASA1, NCK1 and SRC. Interacts (tyrosine phosphorylated form) with INSR, the interaction (Tyr-27-phosphorylated form) is increased on insulin stimulation. Interacts (Tyr-19 phosphorylated form) with MAPK1 (phosphorylated form); the interaction, promoted by insulin, leads to nuclear location and MAPK1 activation. Interacts with STAT3; the interaction is increased on insulin-induced tyrosine phosphorylation leading to STAT activation. In terms of processing, phosphorylated on serine and tyrosine residues. CAV1 promotes phosphorylation on Ser-23 which then targets the complex to the plasma membrane, lipid rafts and caveolae. Phosphorylation on Ser-36 appears to modulate mitosis in endothelial cells. Phosphorylation on both Tyr-19 and Tyr-27 is required for insulin-induced 'Ser-727' phosphorylation of STAT3 and its activation. Phosphorylation on Tyr-19 is required for insulin-induced phosphorylation of MAPK1 and DNA binding of STAT3. Tyrosine phosphorylation is induced by both EGF and insulin (By. similarity).

It localises to the nucleus. The protein localises to the cytoplasm. The protein resides in the golgi apparatus membrane. It is found in the cell membrane. Its subcellular location is the membrane. It localises to the caveola. Functionally, may act as a scaffolding protein within caveolar membranes. Interacts directly with G-protein alpha subunits and can functionally regulate their activity. Acts as an accessory protein in conjunction with CAV1 in targeting to lipid rafts and driving caveolae formation. The Ser-36 phosphorylated form has a role in modulating mitosis in endothelial cells. Positive regulator of cellular mitogenesis of the MAPK signaling pathway. Required for the insulin-stimulated nuclear translocation and activation of MAPK1 and STAT3, and the subsequent regulation of cell cycle progression. In Chlorocebus aethiops (Green monkey), this protein is Caveolin-2 (CAV2).